The chain runs to 87 residues: Small ribosomal subunit protein uS15 (87 aa).

Residues 1–19 show a composition bias toward basic and acidic residues; it reads MEKARKEQLIREYATHEGD. Positions 1–22 are disordered; that stretch reads MEKARKEQLIREYATHEGDTGS.

It belongs to the universal ribosomal protein uS15 family. In terms of assembly, part of the 30S ribosomal subunit. Forms a bridge to the 50S subunit in the 70S ribosome, contacting the 23S rRNA.

In terms of biological role, one of the primary rRNA binding proteins, it binds directly to 16S rRNA where it helps nucleate assembly of the platform of the 30S subunit by binding and bridging several RNA helices of the 16S rRNA. Forms an intersubunit bridge (bridge B4) with the 23S rRNA of the 50S subunit in the ribosome. This Clostridium novyi (strain NT) protein is Small ribosomal subunit protein uS15.